The primary structure comprises 288 residues: Small ribosomal subunit protein uS3 (288 aa).

The KH type-2 domain maps to 38-106 (IRRMMSKGLE…QVQLNIIEVK (69 aa)). A disordered region spans residues 209–288 (PGRETPAEAP…TQPAETQQEG (80 aa)). The segment covering 219 to 232 (SRPRRERGDRSERP) has biased composition (basic and acidic residues). Residues 249–264 (AGRAAATTIAQAAETP) show a composition bias toward low complexity. Over residues 277 to 288 (AATQPAETQQEG) the composition is skewed to polar residues.

The protein belongs to the universal ribosomal protein uS3 family. Part of the 30S ribosomal subunit. Forms a tight complex with proteins S10 and S14.

Functionally, binds the lower part of the 30S subunit head. Binds mRNA in the 70S ribosome, positioning it for translation. The polypeptide is Small ribosomal subunit protein uS3 (Salinispora tropica (strain ATCC BAA-916 / DSM 44818 / JCM 13857 / NBRC 105044 / CNB-440)).